A 225-amino-acid chain; its full sequence is UPF0758 protein XAC3915 (225 aa).

The MPN domain occupies 102–224 (ALSDPPSVGR…PVSFAERGWL (123 aa)). Residues histidine 173, histidine 175, and aspartate 186 each contribute to the Zn(2+) site. The JAMM motif signature appears at 173–186 (HNHPSGNPEPSEAD).

Belongs to the UPF0758 family.

The polypeptide is UPF0758 protein XAC3915 (Xanthomonas axonopodis pv. citri (strain 306)).